A 333-amino-acid polypeptide reads, in one-letter code: 4-hydroxy-3-methylbut-2-enyl diphosphate reductase (333 aa).

Cysteine 34 serves as a coordination point for [4Fe-4S] cluster. Positions 63 and 96 each coordinate (2E)-4-hydroxy-3-methylbut-2-enyl diphosphate. Residues histidine 63 and histidine 96 each coordinate dimethylallyl diphosphate. Positions 63 and 96 each coordinate isopentenyl diphosphate. Cysteine 118 serves as a coordination point for [4Fe-4S] cluster. Histidine 146 is a (2E)-4-hydroxy-3-methylbut-2-enyl diphosphate binding site. Histidine 146 is a dimethylallyl diphosphate binding site. Residue histidine 146 coordinates isopentenyl diphosphate. The Proton donor role is filled by glutamate 148. Residue threonine 186 coordinates (2E)-4-hydroxy-3-methylbut-2-enyl diphosphate. Cysteine 216 is a binding site for [4Fe-4S] cluster. Residues serine 244, serine 245, asparagine 246, and serine 289 each contribute to the (2E)-4-hydroxy-3-methylbut-2-enyl diphosphate site. Dimethylallyl diphosphate contacts are provided by serine 244, serine 245, asparagine 246, and serine 289. Isopentenyl diphosphate-binding residues include serine 244, serine 245, asparagine 246, and serine 289.

It belongs to the IspH family. [4Fe-4S] cluster is required as a cofactor.

The enzyme catalyses isopentenyl diphosphate + 2 oxidized [2Fe-2S]-[ferredoxin] + H2O = (2E)-4-hydroxy-3-methylbut-2-enyl diphosphate + 2 reduced [2Fe-2S]-[ferredoxin] + 2 H(+). It catalyses the reaction dimethylallyl diphosphate + 2 oxidized [2Fe-2S]-[ferredoxin] + H2O = (2E)-4-hydroxy-3-methylbut-2-enyl diphosphate + 2 reduced [2Fe-2S]-[ferredoxin] + 2 H(+). It functions in the pathway isoprenoid biosynthesis; dimethylallyl diphosphate biosynthesis; dimethylallyl diphosphate from (2E)-4-hydroxy-3-methylbutenyl diphosphate: step 1/1. It participates in isoprenoid biosynthesis; isopentenyl diphosphate biosynthesis via DXP pathway; isopentenyl diphosphate from 1-deoxy-D-xylulose 5-phosphate: step 6/6. In terms of biological role, catalyzes the conversion of 1-hydroxy-2-methyl-2-(E)-butenyl 4-diphosphate (HMBPP) into a mixture of isopentenyl diphosphate (IPP) and dimethylallyl diphosphate (DMAPP). Acts in the terminal step of the DOXP/MEP pathway for isoprenoid precursor biosynthesis. This is 4-hydroxy-3-methylbut-2-enyl diphosphate reductase from Mycobacterium sp. (strain JLS).